Consider the following 140-residue polypeptide: Oocyte zinc finger protein XlCOF15 (140 aa).

5 C2H2-type zinc fingers span residues 6 to 28 (FTCKECSKSFSSNSHLSRHQKIH), 34 to 56 (FTCTECDKKFLTRSSLLLHQKVH), 62 to 84 (FICTECGKGFSAKSQLHRHHVIH), 90 to 112 (FTCAECGKTFSYKQSLVTHRAAH), and 118 to 140 (FICTECGKSFSHKNNLQTHLKSH).

It belongs to the krueppel C2H2-type zinc-finger protein family.

Its subcellular location is the nucleus. Its function is as follows. May be involved in transcriptional regulation. The protein is Oocyte zinc finger protein XlCOF15 of Xenopus laevis (African clawed frog).